Reading from the N-terminus, the 533-residue chain is Zona pellucida sperm-binding protein 3 receptor (533 aa).

An N-terminal signal peptide occupies residues 1–28; sequence MFPRLQAVSAPALLQITLMAVLLAPVLG. Sushi domains follow at residues 29 to 88, 89 to 150, 151 to 215, 216 to 275, 276 to 342, 343 to 408, and 409 to 467; these read DCGP…FCAK, KRCR…ECVI, VKCD…TCEK, VICR…TCEP, NGCI…GCER, VCCP…ACES, and AVCL…KCEW. Intrachain disulfides connect Cys-30/Cys-74, Cys-60/Cys-86, Cys-91/Cys-132, Cys-118/Cys-148, Cys-153/Cys-196, Cys-182/Cys-213, Cys-218/Cys-260, Cys-246/Cys-273, Cys-278/Cys-328, Cys-312/Cys-340, Cys-345/Cys-393, Cys-378/Cys-406, Cys-411/Cys-452, and Cys-438/Cys-465. N-linked (GlcNAc...) asparagine glycans are attached at residues Asn-68 and Asn-77. N-linked (GlcNAc...) asparagine glycosylation is found at Asn-185, Asn-191, and Asn-200. N-linked (GlcNAc...) asparagine glycosylation is found at Asn-433 and Asn-455.

In terms of assembly, homooligomer; disulfide-linked. May contain 6-8 monomers per oligomer. The N-terminus may be blocked. Testis. Not expressed in heart, brain, liver or kidney.

Its subcellular location is the cytoplasmic vesicle. The protein localises to the secretory vesicle. The protein resides in the acrosome lumen. Its function is as follows. Probably involved in the formation of the dense core and M1 domain of the acrosome. May also regulate the release of certain secretory proteins following the acrosomal reaction. This is Zona pellucida sperm-binding protein 3 receptor (ZP3R) from Cavia porcellus (Guinea pig).